The primary structure comprises 326 residues: Tetraacyldisaccharide 4'-kinase (326 aa).

An ATP-binding site is contributed by 53–60 (SVGGNGKT).

The protein belongs to the LpxK family.

It catalyses the reaction a lipid A disaccharide + ATP = a lipid IVA + ADP + H(+). It functions in the pathway glycolipid biosynthesis; lipid IV(A) biosynthesis; lipid IV(A) from (3R)-3-hydroxytetradecanoyl-[acyl-carrier-protein] and UDP-N-acetyl-alpha-D-glucosamine: step 6/6. Its function is as follows. Transfers the gamma-phosphate of ATP to the 4'-position of a tetraacyldisaccharide 1-phosphate intermediate (termed DS-1-P) to form tetraacyldisaccharide 1,4'-bis-phosphate (lipid IVA). The chain is Tetraacyldisaccharide 4'-kinase from Actinobacillus pleuropneumoniae serotype 5b (strain L20).